We begin with the raw amino-acid sequence, 141 residues long: Large ribosomal subunit protein uL11 (141 aa).

This sequence belongs to the universal ribosomal protein uL11 family. In terms of assembly, part of the ribosomal stalk of the 50S ribosomal subunit. Interacts with L10 and the large rRNA to form the base of the stalk. L10 forms an elongated spine to which L12 dimers bind in a sequential fashion forming a multimeric L10(L12)X complex. One or more lysine residues are methylated.

In terms of biological role, forms part of the ribosomal stalk which helps the ribosome interact with GTP-bound translation factors. The protein is Large ribosomal subunit protein uL11 of Streptococcus agalactiae serotype III (strain NEM316).